A 398-amino-acid chain; its full sequence is Ubiquitin carboxyl-terminal hydrolase 17-like protein 6 (398 aa).

Positions Ala-80 to Lys-375 constitute a USP domain. Cys-89 functions as the Nucleophile in the catalytic mechanism. The Proton acceptor role is filled by His-334.

It belongs to the peptidase C19 family. USP17 subfamily.

Its subcellular location is the nucleus. It is found in the cytoplasm. It catalyses the reaction Thiol-dependent hydrolysis of ester, thioester, amide, peptide and isopeptide bonds formed by the C-terminal Gly of ubiquitin (a 76-residue protein attached to proteins as an intracellular targeting signal).. Deubiquitinating enzyme that removes conjugated ubiquitin from specific proteins to regulate different cellular processes that may include cell proliferation, progression through the cell cycle, cell migration, and the cellular response to viral infection. Seems to be non-functional in the regulation of apoptosis. This is Ubiquitin carboxyl-terminal hydrolase 17-like protein 6 (USP17L6P) from Homo sapiens (Human).